A 295-amino-acid chain; its full sequence is Proline iminopeptidase (295 aa).

In terms of domain architecture, AB hydrolase-1 spans 35 to 279 (TLHGGPGMSH…ACSHLTMWED (245 aa)). The active-site Nucleophile is the Ser-107. Asp-246 is an active-site residue. Residue His-273 is the Proton donor of the active site.

Belongs to the peptidase S33 family. In terms of assembly, part of the tricorn proteolytic complex.

The enzyme catalyses Release of N-terminal proline from a peptide.. Its function is as follows. Cleaves H-Pro-AMC as well as a wide spectrum of amino acid substrates and several peptide substrates without a proline at the N-terminus. In conjunction with the three factors F1, F2 and F3, Tricorn degrades oligopeptides in a sequential manner, yielding free amino acids. This Thermoplasma volcanium (strain ATCC 51530 / DSM 4299 / JCM 9571 / NBRC 15438 / GSS1) protein is Proline iminopeptidase (pip).